The chain runs to 145 residues: Putative phosphatidylglycerol/phosphatidylinositol transfer protein DDB_G0282179 (145 aa).

A signal peptide spans 1 to 20 (MIKTILLLLINFMLILIVNG). A glycan (N-linked (GlcNAc...) asparagine) is linked at asparagine 134.

Belongs to the NPC2 family. As to quaternary structure, monomer.

Catalyzes the intermembrane transfer of phosphatidylglycerol and phosphatidylinositol. This Dictyostelium discoideum (Social amoeba) protein is Putative phosphatidylglycerol/phosphatidylinositol transfer protein DDB_G0282179.